A 427-amino-acid chain; its full sequence is TNF receptor-associated factor family protein DDB_G0285149 (427 aa).

The RING-type zinc finger occupies 20–65 (CIVCTDLLSESHDKIQVNQCPHGHCLCSDCWTKQIENKKKECPICR). 2 TRAF-type zinc fingers span residues 122 to 178 (THFK…INKD) and 178 to 234 (DHLE…KHQA). The MATH domain occupies 284–415 (KYSNQWVIEN…GNKLTIKFEI (132 aa)).

The protein belongs to the TNF receptor-associated factor family. A subfamily.

It localises to the cytoplasm. Functionally, probable adapter protein and signal transducer that links members of the tumor necrosis factor receptor family to different signaling pathways by association with the receptor cytoplasmic domain and kinases. The sequence is that of TNF receptor-associated factor family protein DDB_G0285149 from Dictyostelium discoideum (Social amoeba).